The sequence spans 606 residues: Proline--tRNA ligase (606 aa).

Belongs to the class-II aminoacyl-tRNA synthetase family. ProS type 1 subfamily. Homodimer.

The protein localises to the cytoplasm. It carries out the reaction tRNA(Pro) + L-proline + ATP = L-prolyl-tRNA(Pro) + AMP + diphosphate. Catalyzes the attachment of proline to tRNA(Pro) in a two-step reaction: proline is first activated by ATP to form Pro-AMP and then transferred to the acceptor end of tRNA(Pro). As ProRS can inadvertently accommodate and process non-cognate amino acids such as alanine and cysteine, to avoid such errors it has two additional distinct editing activities against alanine. One activity is designated as 'pretransfer' editing and involves the tRNA(Pro)-independent hydrolysis of activated Ala-AMP. The other activity is designated 'posttransfer' editing and involves deacylation of mischarged Ala-tRNA(Pro). The misacylated Cys-tRNA(Pro) is not edited by ProRS. The chain is Proline--tRNA ligase from Kocuria rhizophila (strain ATCC 9341 / DSM 348 / NBRC 103217 / DC2201).